The sequence spans 349 residues: MDENKKRALAAALGQIEKQFGKGAVMRMGDHERQAIPAISTGSLGLDIALGIGGLPKGRIVEIYGPESSGKTTLTLSTIAEAQKQGATCAFVDAEHALDPDYAAKLGVNVDDLLVSQPDTGEQALEITDMLVRSNAVDVIIVDSVAALVPKAEIEGEMGDQHVGLQARLMSQALRKITGNIQNANCLVIFINQIRMKIGVMFGNPETTTGANALKFYASVRLDIRRTGAVKESDEVIGSETRVKVVKNKVAPPFRQAEFQILYGKGIYRNGEIIDLGVQLGLLEKSGAWYSYQGSKIGQGKANAAKFLEDNPEVAAAVEKSIRDQLLAAPASARPAALADEPADADLDY.

65–72 (GPESSGKT) contacts ATP.

This sequence belongs to the RecA family.

It localises to the cytoplasm. Can catalyze the hydrolysis of ATP in the presence of single-stranded DNA, the ATP-dependent uptake of single-stranded DNA by duplex DNA, and the ATP-dependent hybridization of homologous single-stranded DNAs. It interacts with LexA causing its activation and leading to its autocatalytic cleavage. In Azotobacter vinelandii, this protein is Protein RecA.